We begin with the raw amino-acid sequence, 544 residues long: Chaperonin GroEL 1 (544 aa).

ATP is bound by residues T30 to P33, K51, D87 to T91, G415, D481 to L483, and D497.

This sequence belongs to the chaperonin (HSP60) family. Forms a cylinder of 14 subunits composed of two heptameric rings stacked back-to-back. Interacts with the co-chaperonin GroES.

It localises to the cytoplasm. It carries out the reaction ATP + H2O + a folded polypeptide = ADP + phosphate + an unfolded polypeptide.. Its function is as follows. Together with its co-chaperonin GroES, plays an essential role in assisting protein folding. The GroEL-GroES system forms a nano-cage that allows encapsulation of the non-native substrate proteins and provides a physical environment optimized to promote and accelerate protein folding. The sequence is that of Chaperonin GroEL 1 from Chlamydia pneumoniae (Chlamydophila pneumoniae).